The primary structure comprises 177 residues: Ferritin, heavy subunit (177 aa).

Residues 7-156 (QNFHQDCEAA…DWVTNLRRMG (150 aa)) form the Ferritin-like diiron domain. Residues Glu-24, Glu-59, His-62, Glu-104, and Gln-138 each contribute to the Fe cation site.

This sequence belongs to the ferritin family. As to quaternary structure, oligomer of 24 subunits. There are at least two types of subunits. The functional molecule forms a roughly spherical shell with a diameter of 12 nm and contains a central cavity into which the insoluble mineral iron core is deposited. As to expression, liver, gonads, head kidney, heart and spleen.

The enzyme catalyses 4 Fe(2+) + O2 + 4 H(+) = 4 Fe(3+) + 2 H2O. In terms of biological role, stores iron in a soluble, non-toxic, readily available form. Important for iron homeostasis. Has ferroxidase activity. Iron is taken up in the ferrous form and deposited as ferric hydroxides after oxidation. This chain is Ferritin, heavy subunit, found in Salmo salar (Atlantic salmon).